Reading from the N-terminus, the 246-residue chain is Pyridoxine 5'-phosphate synthase (246 aa).

Asparagine 10 serves as a coordination point for 3-amino-2-oxopropyl phosphate. Position 12 to 13 (aspartate 12 to histidine 13) interacts with 1-deoxy-D-xylulose 5-phosphate. Arginine 21 is a binding site for 3-amino-2-oxopropyl phosphate. Histidine 46 serves as the catalytic Proton acceptor. 1-deoxy-D-xylulose 5-phosphate contacts are provided by arginine 48 and histidine 53. The active-site Proton acceptor is glutamate 73. Threonine 103 contacts 1-deoxy-D-xylulose 5-phosphate. Histidine 193 functions as the Proton donor in the catalytic mechanism. Residues glycine 194 and glycine 215–histidine 216 each bind 3-amino-2-oxopropyl phosphate.

The protein belongs to the PNP synthase family. Homooctamer; tetramer of dimers.

It is found in the cytoplasm. The enzyme catalyses 3-amino-2-oxopropyl phosphate + 1-deoxy-D-xylulose 5-phosphate = pyridoxine 5'-phosphate + phosphate + 2 H2O + H(+). It participates in cofactor biosynthesis; pyridoxine 5'-phosphate biosynthesis; pyridoxine 5'-phosphate from D-erythrose 4-phosphate: step 5/5. Its function is as follows. Catalyzes the complicated ring closure reaction between the two acyclic compounds 1-deoxy-D-xylulose-5-phosphate (DXP) and 3-amino-2-oxopropyl phosphate (1-amino-acetone-3-phosphate or AAP) to form pyridoxine 5'-phosphate (PNP) and inorganic phosphate. The polypeptide is Pyridoxine 5'-phosphate synthase (Rhodopirellula baltica (strain DSM 10527 / NCIMB 13988 / SH1)).